The primary structure comprises 527 residues: ATP synthase subunit alpha (527 aa).

172 to 179 provides a ligand contact to ATP; the sequence is GDRQTGKT.

This sequence belongs to the ATPase alpha/beta chains family. F-type ATPases have 2 components, CF(1) - the catalytic core - and CF(0) - the membrane proton channel. CF(1) has five subunits: alpha(3), beta(3), gamma(1), delta(1), epsilon(1). CF(0) has three main subunits: a(1), b(2) and c(9-12). The alpha and beta chains form an alternating ring which encloses part of the gamma chain. CF(1) is attached to CF(0) by a central stalk formed by the gamma and epsilon chains, while a peripheral stalk is formed by the delta and b chains.

Its subcellular location is the cell inner membrane. It catalyses the reaction ATP + H2O + 4 H(+)(in) = ADP + phosphate + 5 H(+)(out). In terms of biological role, produces ATP from ADP in the presence of a proton gradient across the membrane. The alpha chain is a regulatory subunit. This is ATP synthase subunit alpha from Bacteroides thetaiotaomicron (strain ATCC 29148 / DSM 2079 / JCM 5827 / CCUG 10774 / NCTC 10582 / VPI-5482 / E50).